A 157-amino-acid polypeptide reads, in one-letter code: Acetyltransferase PseH (157 aa).

The region spanning 5–152 is the N-acetyltransferase domain; that stretch reads KNFAELNSQE…YYVCLKQSHC (148 aa).

Functionally, catalyzes the third step in the biosynthesis of pseudaminic acid, a sialic-acid-like sugar that is used to modify flagellin. Mediates N-4 acetylation of UDP-4-amino-4,6-dideoxy-beta-L-AltNAc to form UDP-2,4-diacetamido-2,4,6-trideoxy-beta-L-altropyranose. This chain is Acetyltransferase PseH (pseH), found in Campylobacter jejuni subsp. jejuni serotype O:2 (strain ATCC 700819 / NCTC 11168).